A 703-amino-acid chain; its full sequence is Probable ATP-dependent RNA helicase vasa-like (703 aa).

3 disordered regions span residues 1 to 22, 35 to 73, and 88 to 167; these read MSDD…ESFG, NTGN…GRGG, and RDCP…RGCF. Gly residues predominate over residues 61 to 73; that stretch reads SGGGGFGGRGRGG. The CCHC-type 1 zinc-finger motif lies at 77 to 92; the sequence is CFKCGDEGHMARDCPS. The span at 146–155 shows a compositional bias: gly residues; sequence FGFGSGSGSR. 2 consecutive CCHC-type zinc fingers follow at residues 166–181 and 189–204; these read CFKC…DCPS and CFKC…DCPN. Positions 261–289 match the Q motif motif; that stretch reads ESFQSMNLRPLLLENIVKAGYGCPTPVQK. The Helicase ATP-binding domain occupies 292–475; that stretch reads IPNVMNGRDI…SAFLNNYLFV (184 aa). Position 305 to 312 (305 to 312) interacts with ATP; the sequence is AQTGSGKT. Positions 419–422 match the DEAD box motif; that stretch reads DEAD. Positions 506–651 constitute a Helicase C-terminal domain; that stretch reads MCEEILISAD…TIPDWLTQKA (146 aa). Positions 676-703 are disordered; that stretch reads GGGRGWEKNQASSFLGGPSESNVDEEWD.

This sequence belongs to the DEAD box helicase family. DDX4/VASA subfamily. Expressed in ovaries and testis. Not expressed in somatic tissue of the ovaries including follicle cells, muscle and connective tissue.

Its subcellular location is the cytoplasm. The protein resides in the nucleus. It is found in the nucleolus. The enzyme catalyses ATP + H2O = ADP + phosphate + H(+). In terms of biological role, involved in translational control mechanisms operating in early stages of oogenesis. Required maternally in many stages of oogenesis, including cystocyte differentiation, oocyte differentiation, and specification of anterior-posterior polarity in the developing cysts. Essential for the formation and/or structural integrity of perinuclear nuage particles during germ cell formation. The sequence is that of Probable ATP-dependent RNA helicase vasa-like from Penaeus vannamei (Whiteleg shrimp).